Here is a 693-residue protein sequence, read N- to C-terminus: tRNA (guanine(27)-N(2))-dimethyltransferase (693 aa).

Residues 95–99 (HKLRR) carry the Nucleolar localization signal motif. The C2H2-type zinc-finger motif lies at 144-166 (YHCIICSATITRRTDMLGHVRRH). The Trm1 methyltransferase domain occupies 187-648 (EILKEADTDV…APLMQFKSIL (462 aa)). Residues Arg220, Asp267, Asp317, and Ala318 each contribute to the S-adenosyl-L-methionine site. Positions 448, 451, 473, and 475 each coordinate Zn(2+). Lys545 participates in a covalent cross-link: Glycyl lysine isopeptide (Lys-Gly) (interchain with G-Cter in SUMO2). A phosphoserine mark is found at Ser572 and Ser667.

Belongs to the class I-like SAM-binding methyltransferase superfamily. Trm1 family.

Its subcellular location is the nucleus. It is found in the nucleolus. It carries out the reaction guanosine(27) in tRNA(Tyr) + 2 S-adenosyl-L-methionine = N(2)-dimethylguanosine(27) in tRNA(Tyr) + 2 S-adenosyl-L-homocysteine + 2 H(+). Functionally, specifically dimethylates a single guanine residue at position 27 of tRNA(Tyr) using S-adenosyl-L-methionine as donor of the methyl groups. Dimethylation at position 27 of tRNA(Tyr) is required for efficient translation of tyrosine codons. Also required to maintain 3-(3-amino-3-carboxypropyl)uridine (acp3U) in the D-loop of several cytoplasmic tRNAs. The protein is tRNA (guanine(27)-N(2))-dimethyltransferase (TRMT1L) of Macaca fascicularis (Crab-eating macaque).